The following is a 561-amino-acid chain: MAEASSLERQSPGAASCLPHSLCPGEPNLQTTAVVSMGSADHQFHLAEILSQNYGVREEHEGAAPGPEKPEEELEKDFVSQSSDMPLDELLALYGYETSDPISERESEGSDTAAHLPDMTLDKDQIAKDLLSGEEEEETQSSADDLTPSVTSHEASDLFPSQSGSCFLADADKEPGSSSSSDAEEDPLPANKCKKEIMVGPQFQADLSNLHSNRHGEKIYENEDQLLWDPNILPEREVEEFLYRAVKRRWHEMAGSQLPEGEAVKDSEQALYELVKCNFNAEEALRRLRFNVKVIRDGLCAWSEEERRNFEHGFRVHGKNFHLIQANKVRTRSVGECVEYYYLWKKSERYDYFSQQTRLGRRKYGPSGNTDADQDLEGSDPDGPGRPRSSPPLPLPAAAHGPGPEHDRLAQMHTEPLSMGSSMSRSLGEPGEALDVPPSSEPGPRLFPPLDEPSALPSSRRPPALAEPAFFPPATAAPEPGASPRLAVDLTLPEELPLVSSHEDTDGEPEETVGPPQVALSVAEFGLIGIGDVNPFLASHPACPASGLHSEPLSHCNVMTC.

Disordered regions lie at residues 1 to 28 and 52 to 188; these read MAEA…GEPN and QNYG…EDPL. At Ser11 the chain carries Phosphoserine. Over residues 140-165 the composition is skewed to polar residues; the sequence is QSSADDLTPSVTSHEASDLFPSQSGS. One can recognise an ELM2 domain in the interval 195-292; the sequence is KEIMVGPQFQ…EALRRLRFNV (98 aa). The SANT domain maps to 297–349; the sequence is DGLCAWSEEERRNFEHGFRVHGKNFHLIQANKVRTRSVGECVEYYYLWKKSER. The disordered stretch occupies residues 360 to 515; that stretch reads GRRKYGPSGN…DGEPEETVGP (156 aa). The span at 417–428 shows a compositional bias: low complexity; sequence LSMGSSMSRSLG. Over residues 439–451 the composition is skewed to pro residues; the sequence is SSEPGPRLFPPLD. Positions 453-482 are enriched in low complexity; that stretch reads PSALPSSRRPPALAEPAFFPPATAAPEPGA.

In terms of assembly, part of a complex containing at least CDYL, MIER1, MIER2, HDAC1 and HDAC2.

The protein resides in the nucleus. Transcriptional repressor. The sequence is that of Mesoderm induction early response protein 2 (MIER2) from Bos taurus (Bovine).